The chain runs to 786 residues: DNA repair and recombination protein RAD54-like (786 aa).

Residues Arg2 to Gln9 are required for chromatin remodeling, strand pairing activities and coupling of ATPase activity. Residue Thr22 is modified to Phosphothreonine. Residues Glu165–Glu340 form the Helicase ATP-binding domain. Asp178–Thr185 contacts ATP. The short motif at Asp291 to His294 is the DEGH box element. In terms of domain architecture, Helicase C-terminal spans Leu497–Thr654. The tract at residues Glu738 to Phe786 is disordered. Residues Asn776 to Phe786 show a composition bias toward polar residues.

Belongs to the SNF2/RAD54 helicase family. In terms of assembly, interacts (via N-terminus) with spn-A/Rad51.

Its subcellular location is the nucleus. In terms of biological role, involved in mitotic DNA repair and meiotic recombination. Functions in the recombinational DNA repair pathway. Essential for interhomolog gene conversion (GC), but may have a less important role in intersister GC than spn-A/Rad51. In the presence of DNA, spn-A/Rad51 enhances the ATPase activity of okr/Rad54. The chain is DNA repair and recombination protein RAD54-like from Drosophila grimshawi (Hawaiian fruit fly).